Consider the following 940-residue polypeptide: MIEWTLKKLIGTKNERELKKAHAKVARVNELETRMRALKDEDFVSETNRMRQEIQNGRSLDDLLFEAFAITREAARRVIGQRHYDVQLIGGMFLHEGCIAEMRTGEGKTLTATLPTYLNALSGRGVHVVTVNDYLARRDAEWMGRVYRFLGMTTGCVLHELNDKQRQEAYRSDITYGQNNEFGFDYLRDNMKFRLQDYVQRELNFAIVDEVDSILIDEARTPLIISGPTEDSTDKYYRVDQVIPGLVPDQDYTLDEKHRSVSLTDDGIEKLQKRLGVGNLYDPGEIEMLHHVDQALRAHTLYKRDKDYVVKDGEVVIVDEFTGRQMPGRRWSDGLHQAIEAKEGVKIENENQTLATVSFQNYFRMYSKLAGMTGTADTEAEEFAKIYNLDVRVIPTNRPPIRKDLQDVVYKTEREKFEAVAAEIEELHKNGQPVLVGTVSIAKSEVVASFLKKRGIPHNVLNAKQHQREADIVAQAGRKGAVTISTNMAGRGTDILLGGNAEVLAKASMGPPPEPPTSAPDGQPLDLTAYEAEVAAWEQKFADTKAKLEEQTKKEREEVHTAGGLFIIGTERHESRRVDNQLRGRAGRQGDPGGSRFFLSLEDDLMRIFGSERIQGLMERLGMEEGEVIEHVWLSRAIEGAQKRVEGHNFDIRKNLLEYDDVMNQQRRTIYKLRRQVLAAGAGVPLVEYDEDPKTRIKTRSERTVSWADFRELILDSMEDVIVSLTDTYAPTRGVEGWDIAALQQGVKETFNLEMNFEGVGNREELQEHIYKAAEKVFQARDEEFGENFMRFLQYNYLATIDRLWKDHLLAMDHLRQGIGLRGYGQKDPKQEYKKEGYQGFIQMLSAIKAQFVTQLMHVQPRSASSAAEEAARIQRQLAQQQKKAVEGRATADGKLDEGSVAAAARPAAASRPAVGRNDPCPCGSGRKYKKCHGASEASV.

Residues Gln-87, 105 to 109 (GEGKT), and Asp-494 each bind ATP. The disordered stretch occupies residues 879-940 (AQQQKKAVEG…KCHGASEASV (62 aa)). Residues 884-898 (KAVEGRATADGKLDE) are compositionally biased toward basic and acidic residues. Residues 900–915 (SVAAAARPAAASRPAV) show a composition bias toward low complexity. Residues Cys-921, Cys-923, Cys-932, and His-933 each contribute to the Zn(2+) site.

It belongs to the SecA family. As to quaternary structure, monomer and homodimer. Part of the essential Sec protein translocation apparatus which comprises SecA, SecYEG and auxiliary proteins SecDF-YajC and YidC. Zn(2+) is required as a cofactor.

It localises to the cell inner membrane. It is found in the cytoplasm. It carries out the reaction ATP + H2O + cellular proteinSide 1 = ADP + phosphate + cellular proteinSide 2.. Its function is as follows. Part of the Sec protein translocase complex. Interacts with the SecYEG preprotein conducting channel. Has a central role in coupling the hydrolysis of ATP to the transfer of proteins into and across the cell membrane, serving as an ATP-driven molecular motor driving the stepwise translocation of polypeptide chains across the membrane. The polypeptide is Protein translocase subunit SecA (Myxococcus xanthus (strain DK1622)).